A 206-amino-acid chain; its full sequence is MAPSHLSVREVREDEKPLVLEMLKAGVKDTENRVALHALTRPPALLLLAAASSGLRFVLASFALALLLPVFLAVTAVKLGLRARWGSLPPPGGLGGPWVAVRGSGDVCGVLALAPGTNAGDGARVTRLSVSRWHRRRGVGRRLLAFAEARARAWAGGMGEPRARLVVPVAVAAWGVAGMLEGCGYQAEGGWGCLGYTLVREFSKDL.

The N-acetyltransferase domain occupies 55–206 (LRFVLASFAL…TLVREFSKDL (152 aa)). The chain crosses the membrane as a helical span at residues 57–77 (FVLASFALALLLPVFLAVTAV).

It belongs to the camello family.

It is found in the membrane. Functionally, probable acetyltransferase. Its function is as follows. May act as a transcription factor regulating the expression of coproporphyrinogen oxidase by binding to a promoter regulatory element. This chain is Probable N-acetyltransferase 14 (NAT14), found in Macaca fascicularis (Crab-eating macaque).